We begin with the raw amino-acid sequence, 520 residues long: Nonsense-mediated mRNA decay factor SMG9 (520 aa).

Positions methionine 1 to threonine 143 are disordered. Serine 2 is modified (N-acetylserine). Residues serine 2, serine 4, serine 7, serine 32, and serine 53 each carry the phosphoserine modification. Residues glycine 36 to serine 53 show a composition bias toward basic and acidic residues. Over residues glutamine 78–leucine 94 the composition is skewed to pro residues. Positions glycine 109–glycine 121 are enriched in low complexity. Residues threonine 122–proline 133 show a composition bias toward pro residues. The residue at position 451 (serine 451) is a Phosphoserine.

Belongs to the SMG9 family. As to quaternary structure, self-associates to form homodimers and forms heterodimers with SMG8; these assembly forms may represent SMG1C intermediate forms. Component of the SMG1C complex composed of SMG1, SMG8 and SMG9. Self-associates to form homodimers and forms heterodimers with SMG8; these assembly forms may represent SMG1C intermediate forms. Interacts with DHX34; the interaction is RNA-independent. Phosphorylated by SMG1.

Involved in nonsense-mediated decay (NMD) of mRNAs containing premature stop codons. Is recruited by release factors to stalled ribosomes together with SMG1 and SMG8 (forming the SMG1C protein kinase complex) and, in the SMG1C complex, is required for the efficient association between SMG1 and SMG8. Plays a role in brain, heart, and eye development. This Bos taurus (Bovine) protein is Nonsense-mediated mRNA decay factor SMG9.